Consider the following 230-residue polypeptide: 3-dehydroquinate dehydratase (230 aa).

Residues serine 26, 51–53 (EIR), and arginine 84 contribute to the 3-dehydroquinate site. Histidine 127 (proton donor/acceptor) is an active-site residue. Lysine 150 acts as the Schiff-base intermediate with substrate in catalysis. 3-dehydroquinate-binding residues include arginine 190, threonine 209, and glutamine 213.

The protein belongs to the type-I 3-dehydroquinase family. As to quaternary structure, homodimer.

The enzyme catalyses 3-dehydroquinate = 3-dehydroshikimate + H2O. The protein operates within metabolic intermediate biosynthesis; chorismate biosynthesis; chorismate from D-erythrose 4-phosphate and phosphoenolpyruvate: step 3/7. Involved in the third step of the chorismate pathway, which leads to the biosynthesis of aromatic amino acids. Catalyzes the cis-dehydration of 3-dehydroquinate (DHQ) and introduces the first double bond of the aromatic ring to yield 3-dehydroshikimate. The polypeptide is 3-dehydroquinate dehydratase (Thermoplasma volcanium (strain ATCC 51530 / DSM 4299 / JCM 9571 / NBRC 15438 / GSS1)).